Here is a 554-residue protein sequence, read N- to C-terminus: 2-succinyl-5-enolpyruvyl-6-hydroxy-3-cyclohexene-1-carboxylate synthase (554 aa).

This sequence belongs to the TPP enzyme family. MenD subfamily. As to quaternary structure, homodimer. Mg(2+) is required as a cofactor. It depends on Mn(2+) as a cofactor. The cofactor is thiamine diphosphate.

It carries out the reaction isochorismate + 2-oxoglutarate + H(+) = 5-enolpyruvoyl-6-hydroxy-2-succinyl-cyclohex-3-ene-1-carboxylate + CO2. Its pathway is quinol/quinone metabolism; 1,4-dihydroxy-2-naphthoate biosynthesis; 1,4-dihydroxy-2-naphthoate from chorismate: step 2/7. It functions in the pathway quinol/quinone metabolism; menaquinone biosynthesis. Its function is as follows. Catalyzes the thiamine diphosphate-dependent decarboxylation of 2-oxoglutarate and the subsequent addition of the resulting succinic semialdehyde-thiamine pyrophosphate anion to isochorismate to yield 2-succinyl-5-enolpyruvyl-6-hydroxy-3-cyclohexene-1-carboxylate (SEPHCHC). The chain is 2-succinyl-5-enolpyruvyl-6-hydroxy-3-cyclohexene-1-carboxylate synthase from Mycobacterium tuberculosis (strain ATCC 25177 / H37Ra).